We begin with the raw amino-acid sequence, 559 residues long: MSEKQVPSFRWTQALRRGLSNWTEPVKVDVIKDARAIISALDFNQVAQVQRIMRKEKRTDSDLTRLRDMNKEVDALMSMRSTQHNVVLRAGGLSKDELLELSADLEKLRKKVIRAEGGNPGVYQGNLTATQLNQRAELMKLVGMGPGLRSGNGVVRVWDVKDSSLMINQFGSMPALTIACMTEQGGETMNDVVQGLSALGLVYTVKFPNLDDLEKLSEQHPCLKSITQEQSQINISGYNLSLSAAVKAGACMIDGGNMLETIKMSPPMFSSIIKAVLQVKNREQMFVGSVGVQRNPYENLLYKLCLSGEGWPYIGSRSQIVGRAWDNTLIDLEGKPAVSPPPVKNGGPINLSPLSKGQEDLINQAVQKLSPKETTWIDIEGPAGDPVELAIYQPESGNYLHCYRAPHNESAFKDQSRYSHGLLLKDLKAARPGLISAIIKALPKGMVLTAQGSDDIEQLILMHGRRDIKVVDVKLTSEHARVFEDPVWDRFNPLCEKHTGLVIKKKKKGAPPSSTNPHCALMDCIMFDATVTGYIRDVKPRQLIPIDLLFKDDLNLINL.

Residues 53–235 form a binding site for the cap structure m7GTP region; the sequence is MRKEKRTDSD…ITQEQSQINI (183 aa). Mn(2+) contacts are provided by Asp-378 and Glu-380. The Zn(2+) site is built by Glu-388, Cys-495, His-498, and Cys-519. A Mn(2+)-binding site is contributed by Asp-523.

The protein belongs to the arenaviridae nucleocapsid protein family. Homomultimerizes to form the nucleocapsid. Binds to viral genomic RNA. Interacts with glycoprotein G2. Interacts with protein Z; this interaction probably directs the encapsidated genome to budding sites. Interacts with protein L; this interaction does not interfere with Z-L interaction. Interacts with host IKBKE (via Protein kinase domain); the interaction inhibits IKBKE kinase activity.

Its subcellular location is the virion. The protein localises to the host cytoplasm. Functionally, encapsidates the genome, protecting it from nucleases. The encapsidated genomic RNA is termed the nucleocapsid (NC). Serves as template for viral transcription and replication. The increased presence of protein N in host cell does not seem to trigger the switch from transcription to replication as observed in other negative strain RNA viruses. Through the interaction with host IKBKE, strongly inhibits the phosphorylation and nuclear translocation of host IRF3, a protein involved in interferon activation pathway, leading to the inhibition of interferon-beta and IRF3-dependent promoters activation. Also encodes a functional 3'-5' exoribonuclease that degrades preferentially dsRNA substrates and thereby participates in the suppression of interferon induction. The sequence is that of Nucleoprotein from Sooretamys angouya (Paraguayan rice rat).